The sequence spans 140 residues: Arsenate reductase (140 aa).

Cysteine 11 acts as the Nucleophile; cysteine thioarsenate intermediate in catalysis.

The protein belongs to the ArsC family.

The enzyme catalyses [glutaredoxin]-dithiol + arsenate + glutathione + H(+) = glutathionyl-S-S-[glutaredoxin] + arsenite + H2O. Its function is as follows. Involved in resistance to arsenate. Catalyzes the reduction of arsenate [As(V)] to arsenite [As(III)]. The resulting arsenite is then extruded from the cell via the aquaglyceroporin AqpS. Does not display antimonate reductase activity. The protein is Arsenate reductase of Rhizobium meliloti (strain 1021) (Ensifer meliloti).